The following is a 102-amino-acid chain: NADH-quinone oxidoreductase subunit K (102 aa).

Helical transmembrane passes span 5–25 (LGHFLSLGAMLFALSVIGIFL), 31–51 (IVLLMAIELMLLAVNMNFVAF), and 62–82 (IFVFFILTVAAAESAIGLALL).

This sequence belongs to the complex I subunit 4L family. In terms of assembly, NDH-1 is composed of 14 different subunits. Subunits NuoA, H, J, K, L, M, N constitute the membrane sector of the complex.

It localises to the cell inner membrane. The catalysed reaction is a quinone + NADH + 5 H(+)(in) = a quinol + NAD(+) + 4 H(+)(out). NDH-1 shuttles electrons from NADH, via FMN and iron-sulfur (Fe-S) centers, to quinones in the respiratory chain. The immediate electron acceptor for the enzyme in this species is believed to be ubiquinone. Couples the redox reaction to proton translocation (for every two electrons transferred, four hydrogen ions are translocated across the cytoplasmic membrane), and thus conserves the redox energy in a proton gradient. The protein is NADH-quinone oxidoreductase subunit K of Variovorax paradoxus (strain S110).